Reading from the N-terminus, the 91-residue chain is Potassium channel toxin TdiKIK (91 aa).

An N-terminal signal peptide occupies residues 1 to 25; it reads MVATNRCCVFALLVALLLIHSLAEA. A propeptide spanning residues 26 to 44 is cleaved from the precursor; it reads GKGKEVLGKIKNKLVEVKE. The region spanning 58-91 is the BetaSPN-type CS-alpha/beta domain; sequence EYACPVIDKFCEDHCAAKNAIGKCDDFKCQCLNS. Disulfide bonds link C61–C81, C68–C86, and C72–C88.

As to expression, expressed by the venom gland.

It localises to the secreted. The full peptide presents antibacterial and cytotoxic activities. The synthetic C-terminus (AA 33-76) inhibits voltage-gated potassium channels Kv1.1/KCNA1, Kv1.2/KCNA2, and Kv1.3/KCNA3. The polypeptide is Potassium channel toxin TdiKIK (Tityus discrepans (Venezuelan scorpion)).